The following is a 254-amino-acid chain: 3-deoxy-manno-octulosonate cytidylyltransferase (254 aa).

It belongs to the KdsB family.

The protein localises to the cytoplasm. It catalyses the reaction 3-deoxy-alpha-D-manno-oct-2-ulosonate + CTP = CMP-3-deoxy-beta-D-manno-octulosonate + diphosphate. Its pathway is nucleotide-sugar biosynthesis; CMP-3-deoxy-D-manno-octulosonate biosynthesis; CMP-3-deoxy-D-manno-octulosonate from 3-deoxy-D-manno-octulosonate and CTP: step 1/1. It functions in the pathway bacterial outer membrane biogenesis; lipopolysaccharide biosynthesis. In terms of biological role, activates KDO (a required 8-carbon sugar) for incorporation into bacterial lipopolysaccharide in Gram-negative bacteria. The sequence is that of 3-deoxy-manno-octulosonate cytidylyltransferase from Bordetella parapertussis (strain 12822 / ATCC BAA-587 / NCTC 13253).